The primary structure comprises 707 residues: Protein MICRORCHIDIA 7 (707 aa).

Composition is skewed to basic and acidic residues over residues 1–11 (MDNSIHVKREI) and 575–587 (DNRD…DREG). 2 disordered regions span residues 1-22 (MDNS…AGFP) and 568-619 (EKSA…SGKD). Polar residues predominate over residues 590 to 613 (SIKTPTPASDKFYSSSYPNHNGDN). A coiled-coil region spans residues 620 to 701 (GARLQEELRR…NKIKKMEGSK (82 aa)). The Nuclear localization signal signature appears at 633 to 640 (RRKALEVE).

This sequence belongs to the MORC ATPase protein family. In terms of assembly, homodimer and heterodimer. Component of an RNA-directed DNA methylation (RdDM) complex. Forms homomeric complexes. The cofactor is Mg(2+). Mn(2+) serves as cofactor.

Its subcellular location is the nucleus. In terms of biological role, exhibits ATPase activity. Binds DNA/RNA in a non-specific manner and exhibits endonuclease activity. Probably involved in DNA repair. Involved in RNA-directed DNA methylation (RdDM) as a component of the RdDM machinery and required for gene silencing. May also be involved in the regulation of chromatin architecture to maintain gene silencing. Together with MORC4, acts to suppress a wide set of non-methylated protein-coding genes, especially involved in pathogen response. Positive regulators of defense against the oomycete Hyaloperonospora arabidopsidis (Hpa). The polypeptide is Protein MICRORCHIDIA 7 (Arabidopsis thaliana (Mouse-ear cress)).